We begin with the raw amino-acid sequence, 101 residues long: Urease subunit beta (101 aa).

This sequence belongs to the urease beta subunit family. In terms of assembly, heterotrimer of UreA (gamma), UreB (beta) and UreC (alpha) subunits. Three heterotrimers associate to form the active enzyme.

It localises to the cytoplasm. It carries out the reaction urea + 2 H2O + H(+) = hydrogencarbonate + 2 NH4(+). It participates in nitrogen metabolism; urea degradation; CO(2) and NH(3) from urea (urease route): step 1/1. The chain is Urease subunit beta from Burkholderia mallei (strain NCTC 10247).